Reading from the N-terminus, the 114-residue chain is MQKDSGPLMPLHYFGFGYAALVATGGIIGYAKAGSVPSLAAGLFFGGLAGLGAYQLSQDPRNVWVFLATSGTLAGIMGMRFYNSGKFMPAGLIAGASLLMVAKVGISLLSSPHP.

Helical transmembrane passes span 8-28 (LMPL…GGII), 33-53 (AGSV…GLGA), 63-83 (VWVF…RFYN), and 89-109 (PAGL…ISLL).

Belongs to the TMEM14 family.

It localises to the mitochondrion membrane. Required for normal heme biosynthesis. This is Transmembrane protein 14C (Tmem14c) from Mus musculus (Mouse).